We begin with the raw amino-acid sequence, 401 residues long: UPF0283 membrane protein SO_1811 (401 aa).

The segment at 1–22 (MSVELLPHSTEPHANGADKSVS) is disordered. 3 helical membrane passes run 99-119 (LARLSLMALLLLTLVQTVLGL), 129-149 (LFSFYGAVLGIVGSWAIVGVI), and 239-259 (ESAVLLAASPLAVLDMAIILW).

It belongs to the UPF0283 family.

The protein localises to the cell inner membrane. This is UPF0283 membrane protein SO_1811 from Shewanella oneidensis (strain ATCC 700550 / JCM 31522 / CIP 106686 / LMG 19005 / NCIMB 14063 / MR-1).